Reading from the N-terminus, the 331-residue chain is Aflatoxin B1 aldehyde reductase member 4 (331 aa).

Aspartate 44 provides a ligand contact to NADP(+). The Proton donor role is filled by tyrosine 49. Serine 85 is modified (phosphoserine). Residue histidine 113 participates in substrate binding. NADP(+)-binding positions include 143–144 (SN), glutamine 169, 198–208 (NPLAGGLLTGK), and arginine 222. Residue tyrosine 232 coordinates substrate. Position 290 to 298 (290 to 298 (SSLEQLEQN)) interacts with NADP(+).

Belongs to the aldo/keto reductase family. Aldo/keto reductase 2 subfamily. As to expression, mainly expressed in uterus.

Functionally, can reduce the dialdehyde protein-binding form of aflatoxin B1 (AFB1) to the non-binding AFB1 dialcohol. May be involved in protection of liver against the toxic and carcinogenic effects of AFB1, a potent hepatocarcinogen. The polypeptide is Aflatoxin B1 aldehyde reductase member 4 (AKR7L) (Homo sapiens (Human)).